Reading from the N-terminus, the 53-residue chain is Large ribosomal subunit protein bL33 (53 aa).

This sequence belongs to the bacterial ribosomal protein bL33 family.

The chain is Large ribosomal subunit protein bL33 from Ureaplasma parvum serovar 3 (strain ATCC 27815 / 27 / NCTC 11736).